An 835-amino-acid chain; its full sequence is METSICSPENRYSHPYKPYDIQIQLMDAIYDTIDNGYKIGLFESPTGTGKTLSIICSTMTWLRDYKRENVFQPMAGLDGSDTDDSDSDDEPEWVKKAYRDTIVSRSENKMVDYEMYLEKIQNEYENNIQTAGSIKSSRPPKKKRSTAKKQELHDEDFLPEDYYSDSEVKPNADKLTVLESEISQLLDKVNGRTDEIEMTNDCPVNIYFSSRTHSQLNQFAHQLALTKFQSSFKGVEERTKYLPIGSRKQLCINEKVKSFSKNDSNINDVCVDLQKSKEGCQFLPKDYLNSSLTKKLSDLSLSKIHDIEEIADLGSNMKVCPYYSVRKGVEMTEIISLPYQILLSESTRAILNLQIEDSIVVIDEAHNLMDTITSMHSVCITIGEMNSIIKALKFYLGRFLKKLNSGNRIHLMKLIKLCQLVISFIQKSEKCNNIKVGNEINTSDIYQNSTGDMLNIHILEAFLAKSKIAYKIESYMEKVAENENEQAKTSSSNPLLYKIVQFLKCLVNPSKEGKFFWDSTNGITSIKYMLLDPSSVFKDIVSKARCVILCGGTMEPMSEFKNFLFPYVEDKKIKSFSCNHIIPPDNLKVYPVSSQNNVTLEFSFDNRNNPLMIEALGASIVRICQSVPDGVVVFFPSYKYMNHILSIWKSTDVLTQIESQKKLFEEPTSASQVQTILADYANTIKEEKKGAILFSVVGGKMSEGINFADELGRAVVMVGLPYPNAYSGEIIAKRKFIESEAIARGCSMSEAQRNSQSYYENLCMRAVNQSIGRSIRHINDYSIIYLVDCRYQSSRIQNKLSSWVRKRIETRNYNMDQIMEETRDFFMCKTIARLA.

Residues 8–421 (PENRYSHPYK…MKLIKLCQLV (414 aa)) form the Helicase ATP-binding domain. 44–51 (SPTGTGKT) provides a ligand contact to ATP. The tract at residues 130-167 (TAGSIKSSRPPKKKRSTAKKQELHDEDFLPEDYYSDSE) is disordered. Positions 138–147 (RPPKKKRSTA) are enriched in basic residues. Cysteine 251, cysteine 270, cysteine 280, and cysteine 320 together coordinate [4Fe-4S] cluster. Positions 363–366 (DEAH) match the DEAH box motif.

It belongs to the DEAD box helicase family. DEAH subfamily. DDX11/CHL1 sub-subfamily. Requires [4Fe-4S] cluster as cofactor.

It localises to the nucleus. It carries out the reaction Couples ATP hydrolysis with the unwinding of duplex DNA at the replication fork by translocating in the 5'-3' direction. This creates two antiparallel DNA single strands (ssDNA). The leading ssDNA polymer is the template for DNA polymerase III holoenzyme which synthesizes a continuous strand.. It catalyses the reaction ATP + H2O = ADP + phosphate + H(+). ATP-dependent DNA helicase important for chromosome transmission and normal cell cycle progression in G(2)/M. May have a role in changing DNA topology to allow the loading of proteins involved in maintaining sister chromatid cohesion in the vicinity of the centromeres. Has a specific role in chromosome segregation during meiosis II. This chain is ATP-dependent DNA helicase CHL1 (CHL1), found in Scheffersomyces stipitis (strain ATCC 58785 / CBS 6054 / NBRC 10063 / NRRL Y-11545) (Yeast).